The primary structure comprises 148 residues: Large ribosomal subunit protein bL9 (148 aa).

The protein belongs to the bacterial ribosomal protein bL9 family.

Binds to the 23S rRNA. In Leptospira biflexa serovar Patoc (strain Patoc 1 / Ames), this protein is Large ribosomal subunit protein bL9.